The following is a 285-amino-acid chain: Flagellar filament 30.7 kDa core protein (285 aa).

This sequence belongs to the bacterial flagellin family. As to quaternary structure, the core of the flagellum consists of several antigenically related polypeptides. In terms of processing, glycosylated. Glycosylation is not essential for motility.

Its subcellular location is the periplasmic flagellum. It is found in the periplasm. Its function is as follows. Component of the core of the flagella. This chain is Flagellar filament 30.7 kDa core protein (flaB3), found in Treponema maltophilum.